The chain runs to 617 residues: tRNA uridine 5-carboxymethylaminomethyl modification enzyme MnmG (617 aa).

Residues 9-14 (GAGHAG), Val121, and Thr176 each bind FAD. Residue 269-283 (GPRYCPSIEDKFVRF) coordinates NAD(+). Position 366 (Gln366) interacts with FAD.

This sequence belongs to the MnmG family. Homodimer. Heterotetramer of two MnmE and two MnmG subunits. The cofactor is FAD.

The protein localises to the cytoplasm. Functionally, NAD-binding protein involved in the addition of a carboxymethylaminomethyl (cmnm) group at the wobble position (U34) of certain tRNAs, forming tRNA-cmnm(5)s(2)U34. This is tRNA uridine 5-carboxymethylaminomethyl modification enzyme MnmG from Acholeplasma laidlawii (strain PG-8A).